Consider the following 211-residue polypeptide: MMLILGVDEAGKGPVIGSMFVAGVVFSEEDIFDLAACGVKDSKLLSPTRRESMERKILSIARESFVLEVTAQQIDDLRMVMSMNEIMVRAHSRVVSRLQADRAILDAADVNAERFAQRVREVSGKPIDILAEHNADRKHIVVAAASIIAKVARDRSIRDLEAALGRPLGSGYPSDPATVRFLKEWIEENGDLPSFVRKSWSTAQRLKASSV.

One can recognise an RNase H type-2 domain in the interval 2–211 (MLILGVDEAG…TAQRLKASSV (210 aa)). Positions 8, 9, and 106 each coordinate a divalent metal cation.

This sequence belongs to the RNase HII family. Requires Mn(2+) as cofactor. Mg(2+) serves as cofactor.

The protein localises to the cytoplasm. It catalyses the reaction Endonucleolytic cleavage to 5'-phosphomonoester.. Its function is as follows. Endonuclease that specifically degrades the RNA of RNA-DNA hybrids. The sequence is that of Ribonuclease HII from Methanothrix thermoacetophila (strain DSM 6194 / JCM 14653 / NBRC 101360 / PT) (Methanosaeta thermophila).